A 495-amino-acid polypeptide reads, in one-letter code: MAKTQAEINKRLDAYAKGTVDSPYRVKKATSYDPSFGVMEAGAIDADGYYHAQCQDLITDYVLWLTDNKVRTWGNAKDQIKQSYGTGFKIHENKPSTVPKKGWIAVFTSGSYEQWGHIGIVYDGGNTSTFTILEQNWNGYANKKPTKRVDNYYGLTHFIEIPVKAGTTVKKETAKKSASKTPAPKKKATLKVSKNHINYTMDKRGKKPEGMVIHNDAGRSSGQQYENSLANAGYARYANGIAHYYGSEGYVWEAIDAKNQIAWHTGDGTGANSGNFRFAGIEVCQSMSASDAQFLKNEQAVFQFTAEKFKEWGLTPNRKTVRLHMEFVPTACPHRSMVLHTGFNPVTQGRPSQAIMNKLKDYFIKQIKNYMDKGTSSSTVVKDGKTSSASTPATRPVTGSWKKNQYGTWYKPENATFVNGNQPIVTRIGSPFLNAPVGGNLPAGATIVYDEVCIQAGHIWIGYNAYNGNRVYCPVRTCQGVPPNQIPGVAWGVFK.

The region spanning 29–160 is the Peptidase C51 domain; the sequence is ATSYDPSFGV…NYYGLTHFIE (132 aa). The Ca(2+) site is built by Asp45, Asp47, Tyr49, and His51. Cys54 (for endopeptidase activity) is an active-site residue. Asp56 is a binding site for Ca(2+). Active-site for endopeptidase activity residues include His117 and Glu134. In terms of domain architecture, N-acetylmuramoyl-L-alanine amidase spans 205-334; the sequence is GKKPEGMVIH…MEFVPTACPH (130 aa). Positions 214, 324, and 332 each coordinate Zn(2+). Positions 378–393 are enriched in polar residues; the sequence is STVVKDGKTSSASTPA. The disordered stretch occupies residues 378-398; the sequence is STVVKDGKTSSASTPATRPVT. The SH3b domain occupies 412–481; sequence PENATFVNGN…YCPVRTCQGV (70 aa).

Belongs to the N-acetylmuramoyl-L-alanine amidase 2 family. Requires Zn(2+) as cofactor.

It catalyses the reaction Hydrolyzes the link between N-acetylmuramoyl residues and L-amino acid residues in certain cell-wall glycopeptides.. Endolysin that degrades host peptidoglycans and participates in the sequential events which lead to the programmed host cell lysis releasing the mature viral particles. Exhibits lytic activity against Staphylococcus aureus. The CHAP activity cleaves the peptidic bond between the D-alanine of the tetra-peptide stem and the first glycine of the penta-glycine cross-bridge. The N-acetyl-muramidase activity cleaves between N-acetylmuramic acid and N-acetylglucosamine bonds. This Staphylococcus aureus protein is Endolysin LysK.